The sequence spans 280 residues: Extracellular metalloprotease GLRG_06286 (280 aa).

Positions 1–17 (MQVTFTLVAALAGMASA) are cleaved as a signal peptide. The N-linked (GlcNAc...) asparagine glycan is linked to asparagine 51. Histidine 196 contributes to the Zn(2+) binding site. Glutamate 197 is an active-site residue. Histidine 200 is a Zn(2+) binding site. The segment at 217 to 236 (DSIADTPAQSSPSSGCPVGR) is disordered. The cysteines at positions 232 and 259 are disulfide-linked.

Belongs to the peptidase M43B family.

The protein localises to the secreted. Functionally, secreted metalloproteinase that allows assimilation of proteinaceous substrates. The chain is Extracellular metalloprotease GLRG_06286 from Colletotrichum graminicola (strain M1.001 / M2 / FGSC 10212) (Maize anthracnose fungus).